The chain runs to 335 residues: Tryptophan--tRNA ligase (335 aa).

Residues 19–21 and 28–29 contribute to the ATP site; these read QPS and GN. The 'HIGH' region motif lies at 20–29; the sequence is PSSGMLHLGN. Asp143 is an L-tryptophan binding site. Residues 155–157, Ile192, and 201–205 contribute to the ATP site; these read GAD and KMSKS. A 'KMSKS' region motif is present at residues 201 to 205; it reads KMSKS.

Belongs to the class-I aminoacyl-tRNA synthetase family. Homodimer.

The protein resides in the cytoplasm. The catalysed reaction is tRNA(Trp) + L-tryptophan + ATP = L-tryptophyl-tRNA(Trp) + AMP + diphosphate + H(+). Functionally, catalyzes the attachment of tryptophan to tRNA(Trp). The protein is Tryptophan--tRNA ligase of Tropheryma whipplei (strain TW08/27) (Whipple's bacillus).